Here is a 100-residue protein sequence, read N- to C-terminus: Small ribosomal subunit protein uS14 (100 aa).

Belongs to the universal ribosomal protein uS14 family. Part of the 30S ribosomal subunit. Contacts proteins S3 and S10.

Its function is as follows. Binds 16S rRNA, required for the assembly of 30S particles and may also be responsible for determining the conformation of the 16S rRNA at the A site. This chain is Small ribosomal subunit protein uS14, found in Thermosynechococcus vestitus (strain NIES-2133 / IAM M-273 / BP-1).